The following is a 506-amino-acid chain: MLERCKLKILKGACGRVKLYIILVVIPAIVISFFVYEKEKDTIAAEHKQEASVLLNLHRNKINYLIGETMARMTSLSIAIDRPVDIKKMQSILEKTFDSEPRFSGLYFLNAKGDVTASTTELKTKVNLADRSFFIKAKETKKTVISDSYSSRITGQPIFTICVPVLDSKRNVTDYLVAAIQIDYLKNLINLLSPDVYIEVVNQDGKMIFASGQASHAEDQKPVSGYLDDISWNMKVYPNPVTIEELSKSLVLPLSCIIVLLNILFILVLYYLLKRQTQLERSENEAQKLELIGTLAASTAHEIRNPLTGISGFIQLLQKKYKGEEDQLYFSIIEQEIKRINQIVSEFLVLGKPTAEKWELNSLQDIIGEIMPIIYSEGNLYNVEVELQYLTEQPLLVKCTKDHIKQVILNVAKNGLESMPEGGKLTISLGALDKKAIIKVVDNGEGISQEMLDHIFLPFVTSKEKGTGLGLVVCKRIVLMYGGSIHIESEVRRGTEVTITLPVSAS.

Transmembrane regions (helical) follow at residues 17–37 and 250–270; these read VKLYIILVVIPAIVISFFVYE and LVLPLSCIIVLLNILFILVLY. The 208-residue stretch at 298–505 folds into the Histidine kinase domain; that stretch reads STAHEIRNPL…EVTITLPVSA (208 aa). Phosphohistidine; by autocatalysis is present on histidine 301.

As to quaternary structure, oligomerizes, probably forms homodimers; oligomerization is assisted by FloT. Interacts with FloT.

It is found in the cell membrane. The catalysed reaction is ATP + protein L-histidine = ADP + protein N-phospho-L-histidine.. Its function is as follows. Phosphorylates the sporulation-regulatory protein spo0F and, to a minor extent, is responsible for heterogeneous expression of spo0A during logarithmical growth. Also phosphorylates spo0A under biofilm growth conditions. The sequence is that of Sporulation kinase D (kinD) from Bacillus subtilis (strain 168).